The following is a 164-amino-acid chain: ATP synthase subunit b (164 aa).

Residues 12-32 form a helical membrane-spanning segment; the sequence is FILVTGSVIVLLLLIKAFAWG.

Belongs to the ATPase B chain family. F-type ATPases have 2 components, F(1) - the catalytic core - and F(0) - the membrane proton channel. F(1) has five subunits: alpha(3), beta(3), gamma(1), delta(1), epsilon(1). F(0) has three main subunits: a(1), b(2) and c(10-14). The alpha and beta chains form an alternating ring which encloses part of the gamma chain. F(1) is attached to F(0) by a central stalk formed by the gamma and epsilon chains, while a peripheral stalk is formed by the delta and b chains.

It localises to the cell membrane. Its function is as follows. F(1)F(0) ATP synthase produces ATP from ADP in the presence of a proton or sodium gradient. F-type ATPases consist of two structural domains, F(1) containing the extramembraneous catalytic core and F(0) containing the membrane proton channel, linked together by a central stalk and a peripheral stalk. During catalysis, ATP synthesis in the catalytic domain of F(1) is coupled via a rotary mechanism of the central stalk subunits to proton translocation. Functionally, component of the F(0) channel, it forms part of the peripheral stalk, linking F(1) to F(0). The chain is ATP synthase subunit b from Streptococcus equi subsp. zooepidemicus (strain MGCS10565).